A 51-amino-acid polypeptide reads, in one-letter code: Large ribosomal subunit protein bL33 (51 aa).

It belongs to the bacterial ribosomal protein bL33 family.

This Francisella philomiragia subsp. philomiragia (strain ATCC 25017 / CCUG 19701 / FSC 153 / O#319-036) protein is Large ribosomal subunit protein bL33.